Reading from the N-terminus, the 1073-residue chain is Carbamoyl phosphate synthase large chain (1073 aa).

Residues 2–403 form a carboxyphosphate synthetic domain region; it reads PKRTDIKSIL…SLQKALRGLE (402 aa). Residues R129, R169, G175, G176, E208, L210, E215, G241, I242, H243, Q285, and E299 each contribute to the ATP site. One can recognise an ATP-grasp 1 domain in the interval 133–328; the sequence is DVAMKKIGLE…IAKVAAKLAV (196 aa). Mg(2+) contacts are provided by Q285, E299, and N301. Mn(2+) is bound by residues Q285, E299, and N301. Positions 404 to 553 are oligomerization domain; it reads VGATGFDPKV…YSTYEEECEA (150 aa). The tract at residues 554–936 is carbamoyl phosphate synthetic domain; that stretch reads NPSTDREKIM…AFAKAQLGSN (383 aa). Positions 679–870 constitute an ATP-grasp 2 domain; it reads QHAVERLKLK…LAKVAARVMA (192 aa). Residues R715, H754, L756, E761, G786, V787, H788, S789, Q829, and E841 each contribute to the ATP site. Mg(2+) is bound by residues Q829, E841, and N843. Positions 829, 841, and 843 each coordinate Mn(2+). Positions 937-1073 constitute an MGS-like domain; that stretch reads STMKKHGRAL…SVQEMHAQIK (137 aa). An allosteric domain region spans residues 937-1073; the sequence is STMKKHGRAL…SVQEMHAQIK (137 aa).

It belongs to the CarB family. As to quaternary structure, composed of two chains; the small (or glutamine) chain promotes the hydrolysis of glutamine to ammonia, which is used by the large (or ammonia) chain to synthesize carbamoyl phosphate. Tetramer of heterodimers (alpha,beta)4. It depends on Mg(2+) as a cofactor. Requires Mn(2+) as cofactor.

The enzyme catalyses hydrogencarbonate + L-glutamine + 2 ATP + H2O = carbamoyl phosphate + L-glutamate + 2 ADP + phosphate + 2 H(+). The catalysed reaction is hydrogencarbonate + NH4(+) + 2 ATP = carbamoyl phosphate + 2 ADP + phosphate + 2 H(+). Its pathway is amino-acid biosynthesis; L-arginine biosynthesis; carbamoyl phosphate from bicarbonate: step 1/1. It participates in pyrimidine metabolism; UMP biosynthesis via de novo pathway; (S)-dihydroorotate from bicarbonate: step 1/3. Functionally, large subunit of the glutamine-dependent carbamoyl phosphate synthetase (CPSase). CPSase catalyzes the formation of carbamoyl phosphate from the ammonia moiety of glutamine, carbonate, and phosphate donated by ATP, constituting the first step of 2 biosynthetic pathways, one leading to arginine and/or urea and the other to pyrimidine nucleotides. The large subunit (synthetase) binds the substrates ammonia (free or transferred from glutamine from the small subunit), hydrogencarbonate and ATP and carries out an ATP-coupled ligase reaction, activating hydrogencarbonate by forming carboxy phosphate which reacts with ammonia to form carbamoyl phosphate. The sequence is that of Carbamoyl phosphate synthase large chain from Escherichia coli O6:H1 (strain CFT073 / ATCC 700928 / UPEC).